Consider the following 127-residue polypeptide: Dual endothelin-1/VEGF signal peptide receptor (127 aa).

Topologically, residues 1-69 are extracellular; sequence MSTFYVTAVP…EMKSRWNWGS (69 aa). Residues 70-88 traverse the membrane as a helical segment; the sequence is ITCIMCFTCVGSQLSMSSS. Residues 89–127 are Cytoplasmic-facing; that stretch reads KASNFSGPLQLYQRGIGHITNPYRRPPAPAWPCSSSGTT.

In terms of tissue distribution, prominently expressed in brain and heart tissues. Weakly expressed in aorta, adrenal gland, and lung tissues.

The protein resides in the cell membrane. In the Dahl salt-resistant strain, acts as a dual receptor for both endothelin-1 and the signal sequence of vascular endothelial growth factor A and does not act as a receptor for angiotensin-2. Does not bind the VEGFA mature protein. In the Dahl salt-sensitive strain, acts as a dual endothelin-1/angiotensin-2 receptor that is functionally coupled to a calcium-mobilizing transduction system, responding equivalently to both endothelin-1/EDN1 and angiotensin-2 peptides in a highly specific manner. May play a role in angiogenesis with a significant role in cardiovascular and neural development. This Rattus norvegicus (Rat) protein is Dual endothelin-1/VEGF signal peptide receptor.